Consider the following 259-residue polypeptide: Ribonuclease HII (259 aa).

The 188-residue stretch at 72–259 (ERIAGIDEAG…PVREALGVQS (188 aa)) folds into the RNase H type-2 domain. 3 residues coordinate a divalent metal cation: aspartate 78, glutamate 79, and aspartate 170.

It belongs to the RNase HII family. It depends on Mn(2+) as a cofactor. Mg(2+) is required as a cofactor.

Its subcellular location is the cytoplasm. It catalyses the reaction Endonucleolytic cleavage to 5'-phosphomonoester.. Functionally, endonuclease that specifically degrades the RNA of RNA-DNA hybrids. This is Ribonuclease HII from Geobacillus thermodenitrificans (strain NG80-2).